Here is a 70-residue protein sequence, read N- to C-terminus: uncharacterized protein (70 aa).

Transmembrane regions (helical) follow at residues 19–39 and 40–60; these read VIAL…VVGL and LFKL…VRKF.

Its subcellular location is the cell membrane. This is an uncharacterized protein from Streptomyces coelicolor (strain ATCC BAA-471 / A3(2) / M145).